A 280-amino-acid polypeptide reads, in one-letter code: UDP-3-O-acyl-N-acetylglucosamine deacetylase (280 aa).

Positions 77, 238, and 242 each coordinate Zn(2+). Histidine 265 (proton donor) is an active-site residue.

The protein belongs to the LpxC family. Zn(2+) is required as a cofactor.

The catalysed reaction is a UDP-3-O-[(3R)-3-hydroxyacyl]-N-acetyl-alpha-D-glucosamine + H2O = a UDP-3-O-[(3R)-3-hydroxyacyl]-alpha-D-glucosamine + acetate. The protein operates within glycolipid biosynthesis; lipid IV(A) biosynthesis; lipid IV(A) from (3R)-3-hydroxytetradecanoyl-[acyl-carrier-protein] and UDP-N-acetyl-alpha-D-glucosamine: step 2/6. Its function is as follows. Catalyzes the hydrolysis of UDP-3-O-myristoyl-N-acetylglucosamine to form UDP-3-O-myristoylglucosamine and acetate, the committed step in lipid A biosynthesis. In Trichormus variabilis (strain ATCC 29413 / PCC 7937) (Anabaena variabilis), this protein is UDP-3-O-acyl-N-acetylglucosamine deacetylase.